A 568-amino-acid polypeptide reads, in one-letter code: Chaperonin homolog Hsp-60, mitochondrial (568 aa).

The protein belongs to the chaperonin (HSP60) family.

The protein localises to the mitochondrion matrix. Functionally, implicated in mitochondrial protein import and macromolecular assembly. May facilitate the correct folding of imported proteins. May also prevent misfolding and promote the refolding and proper assembly of unfolded polypeptides generated under stress conditions in the mitochondrial matrix. This is Chaperonin homolog Hsp-60, mitochondrial (hsp-60) from Caenorhabditis elegans.